We begin with the raw amino-acid sequence, 1261 residues long: Apoptotic protease-activating factor 1 (1261 aa).

The region spanning 1–90 (MEERARSRLL…GDLASLLHSD (90 aa)) is the CARD domain. The 312-residue stretch at 106–417 (VSPSVQAILS…LELEEVEDVL (312 aa)) folds into the NB-ARC domain. 154–161 (GMAGSGKS) contacts ATP. 13 WD repeats span residues 615 to 654 (PHQGAVYYACFSKDGSKIASCGASKALRVFKSTSGEKLLE), 657 to 696 (AHEEDVLCCAFSPDDRHIATCASDRKVKLWNVERGVLIRE), 700 to 743 (EHEE…SQNT), 746 to 785 (GHMEPVNHCCFSPNDLYLATSSSDGSLKLFEVSSANEWKS), 798 to 836 (EIKAMVKCSTWSADGSQIICAARNTVFVFDVETSDLLLK), 840 to 879 (SRLSTIQFCHACPNSSLLAVALSHYTVELWNFESSKKKAE), 882 to 921 (GHLSWVHCVQFSPDGSLLLSSSDDQTIRLWETDRVHTSSA), 964 to 1003 (ELSSRIRCSCISRNAAFVALGSEDGTVQVIEVPSSKASVK), 1006 to 1045 (GHTKTVHHCQFTDDCEILITSSEDSTIRVWKWRTGECMVL), 1047 to 1088 (GHME…MLQD), 1091 to 1130 (CHEGAVLSCDVSSDGRLFATTSANRTAKVWSSASWKMLFL), 1133 to 1172 (GHKDCVRSCRFSWDNKRLATGDDNGEIRLWSMLDGALLKI), and 1184 to 1223 (YHAGWVTDLHFSPDNRVLVSTAGYIKWWSVESGEALQTFY).

In terms of assembly, monomer. Oligomerizes upon binding of cytochrome c and dATP.

The protein resides in the cytoplasm. Its function is as follows. Oligomeric Apaf-1 mediates the cytochrome c-dependent autocatalytic activation of pro-caspase-9 (Apaf-3), leading to the activation of caspase-3 and apoptosis. This activation requires ATP. The polypeptide is Apoptotic protease-activating factor 1 (apaf1) (Danio rerio (Zebrafish)).